A 331-amino-acid chain; its full sequence is Phosphoribosylformylglycinamidine cyclo-ligase (331 aa).

Belongs to the AIR synthase family.

It localises to the cytoplasm. It carries out the reaction 2-formamido-N(1)-(5-O-phospho-beta-D-ribosyl)acetamidine + ATP = 5-amino-1-(5-phospho-beta-D-ribosyl)imidazole + ADP + phosphate + H(+). The protein operates within purine metabolism; IMP biosynthesis via de novo pathway; 5-amino-1-(5-phospho-D-ribosyl)imidazole from N(2)-formyl-N(1)-(5-phospho-D-ribosyl)glycinamide: step 2/2. In Clostridium botulinum (strain Langeland / NCTC 10281 / Type F), this protein is Phosphoribosylformylglycinamidine cyclo-ligase.